A 461-amino-acid polypeptide reads, in one-letter code: MLKIFNTLTRQKEEFKPIHAGEVGMYVCGITVYDLCHIGHGRTFVAFDVVARYLRFLGYKLKYVRNITDIDDKIIKRANENGESFVALVDRMIAEMHKDFDALNILRPDMEPRATHHIAEIIELTEQLIAKGHAYVADNGDVMFDVPTDPTYGVLSRQDLDQLQAGARVDVVDDKRNPMDFVLWKMSKEGEPSWPSPWGAGRPGWHIECSAMNCKQLGNHFDIHGGGSDLMFPHHENEIAQSTCAHDGQYVNYWMHSGMVMVDREKMSKSLGNFFTVRDVLKYYDAETVRYFLMSGHYRSQLNYSEENLKQARAALERLYTALRGTDKTVAPAGGEAFEARFIEAMDDDFNTPEAYSVLFDMAREVNRLKVEDMAAANAMASHLRKLSAVLGLLEQEPEAFLQSGAQADDSEVAEIEALIQQRLDARKAKDWAAADAARDRLNEMGIVLEDGPQGTTWRRK.

Cys28 contributes to the Zn(2+) binding site. The short motif at 30-40 is the 'HIGH' region element; the sequence is ITVYDLCHIGH. Zn(2+) contacts are provided by Cys209, His234, and Glu238. The 'KMSKS' region motif lies at 266–270; that stretch reads KMSKS. Lys269 is an ATP binding site.

It belongs to the class-I aminoacyl-tRNA synthetase family. In terms of assembly, monomer. Zn(2+) serves as cofactor.

It is found in the cytoplasm. It catalyses the reaction tRNA(Cys) + L-cysteine + ATP = L-cysteinyl-tRNA(Cys) + AMP + diphosphate. The chain is Cysteine--tRNA ligase from Escherichia coli O157:H7.